The primary structure comprises 52 residues: uncharacterized protein (52 aa).

A run of 2 helical transmembrane segments spans residues 4–24 (IIIP…ISLE) and 25–45 (MSIV…FLFV).

The protein localises to the cell membrane. This is an uncharacterized protein from Bacillus subtilis (strain 168).